The following is a 282-amino-acid chain: Ammonia transport outward protein 2 (282 aa).

The tract at residues 1-34 (MSDREQSSGNTAFENPKALDSSEGEFISENNDQS) is disordered. The residue at position 2 (serine 2) is an N-acetylserine. Residues serine 2, serine 7, serine 21, serine 22, serine 28, and serine 40 each carry the phosphoserine modification. Residues 2–86 (SDREQSSGNT…GLAPAPVHKF (85 aa)) are Extracellular-facing. Residues 87–107 (ANPAPLGLSGFALTTFVLSMF) form a helical membrane-spanning segment. Topologically, residues 108–119 (NARAQGITIPNV) are cytoplasmic. A helical membrane pass occupies residues 120–140 (VVGCAMFYGGLVQLIAGIWEI). Residues 141-150 (ALENTFGGTA) are Extracellular-facing. A helical transmembrane segment spans residues 151-171 (LCSFGGFWLSFGAIYIPWFGI). Residues 172–184 (LDAYKDKESDLGN) lie on the Cytoplasmic side of the membrane. Residues 185-205 (ALGFYLLGWALFTFGLSVCTM) form a helical membrane-spanning segment. Over 206 to 207 (KS) the chain is Extracellular. Residues 208–228 (TIMFFALFFLLAVTFLLLSIA) traverse the membrane as a helical segment. Topologically, residues 229–238 (NFTGEVGVTR) are cytoplasmic. The chain crosses the membrane as a helical span at residues 239 to 259 (AGGVLGVIVAFIAWYNAYAGI). The Extracellular portion of the chain corresponds to 260 to 282 (ATRQNSYIMVHPFALPSNDKVFF).

Belongs to the acetate uptake transporter (AceTr) (TC 2.A.96) family.

The protein resides in the cell membrane. Transporter protein required for ammonia export. Involved in acetate resistance. This is Ammonia transport outward protein 2 (ATO2) from Saccharomyces cerevisiae (strain ATCC 204508 / S288c) (Baker's yeast).